Here is a 407-residue protein sequence, read N- to C-terminus: Prolyl hydroxylase EGLN2 (407 aa).

Low complexity-rich tracts occupy residues 1–24 (MDSP…SSEP) and 57–75 (ASAG…TASP). Disordered regions lie at residues 1-34 (MDSP…RARM), 50-89 (CPGV…GELR), and 108-157 (AAQG…CSSG). A Bipartite nuclear localization signal motif is present at residues 89–134 (RPLQSEGAAALVTKGCQRLAAQGARPEAPKRKWAEDGGDAPSPSKR). At serine 130 the chain carries Phosphoserine. Residues 225-235 (VSQRAIPPRSI) are beta(2)beta(3) 'finger-like' loop. The 99-residue stretch at 278 to 376 (GRTKAMVACY…RYAITVWYFD (99 aa)) folds into the Fe2OG dioxygenase domain. 3 residues coordinate Fe cation: histidine 297, aspartate 299, and histidine 358. Arginine 367 provides a ligand contact to 2-oxoglutarate.

As to quaternary structure, interacts (preferably isoform p40) with SIAH2; the interaction targets both SIAH2 isoforms for proteasomal degradation in vitro. Interacts with LIMD1, WTIP and AJUBA. Fe(2+) is required as a cofactor. It depends on L-ascorbate as a cofactor. In terms of processing, ubiquitinated by SIAH1 and/or SIAH2 in response to the unfolded protein response (UPR), leading to its degradation. Expressed in adult and fetal heart, brain, liver, lung, skeletal muscle, and kidney. Also expressed in testis and placenta. Highest levels in adult brain, placenta, lung, kidney, and testis. Expressed in hormone responsive tissues, including normal and cancerous mammary, ovarian and prostate epithelium.

It is found in the nucleus. The enzyme catalyses L-prolyl-[protein] + 2-oxoglutarate + O2 = trans-4-hydroxy-L-prolyl-[protein] + succinate + CO2. It catalyses the reaction L-prolyl-[hypoxia-inducible factor alpha subunit] + 2-oxoglutarate + O2 = trans-4-hydroxy-L-prolyl-[hypoxia-inducible factor alpha subunit] + succinate + CO2. Prolyl hydroxylase that mediates hydroxylation of proline residues in target proteins, such as ATF4, IKBKB, CEP192 and HIF1A. Target proteins are preferentially recognized via a LXXLAP motif. Cellular oxygen sensor that catalyzes, under normoxic conditions, the post-translational formation of 4-hydroxyproline in hypoxia-inducible factor (HIF) alpha proteins. Hydroxylates a specific proline found in each of the oxygen-dependent degradation (ODD) domains (N-terminal, NODD, and C-terminal, CODD) of HIF1A. Also hydroxylates HIF2A. Has a preference for the CODD site for both HIF1A and HIF2A. Hydroxylated HIFs are then targeted for proteasomal degradation via the von Hippel-Lindau ubiquitination complex. Under hypoxic conditions, the hydroxylation reaction is attenuated allowing HIFs to escape degradation resulting in their translocation to the nucleus, heterodimerization with HIF1B, and increased expression of hypoxy-inducible genes. EGLN2 is involved in regulating hypoxia tolerance and apoptosis in cardiac and skeletal muscle. Also regulates susceptibility to normoxic oxidative neuronal death. Links oxygen sensing to cell cycle and primary cilia formation by hydroxylating the critical centrosome component CEP192 which promotes its ubiquitination and subsequent proteasomal degradation. Hydroxylates IKBKB, mediating NF-kappa-B activation in hypoxic conditions. Also mediates hydroxylation of ATF4, leading to decreased protein stability of ATF4. The protein is Prolyl hydroxylase EGLN2 of Homo sapiens (Human).